The following is a 395-amino-acid chain: Cystathionine beta-lyase (395 aa).

K210 carries the post-translational modification N6-(pyridoxal phosphate)lysine.

The protein belongs to the trans-sulfuration enzymes family. In terms of assembly, homotetramer. Requires pyridoxal 5'-phosphate as cofactor.

The protein resides in the cytoplasm. The enzyme catalyses L,L-cystathionine + H2O = L-homocysteine + pyruvate + NH4(+). It carries out the reaction an S-substituted L-cysteine + H2O = a thiol + pyruvate + NH4(+). Its pathway is amino-acid biosynthesis; L-methionine biosynthesis via de novo pathway; L-homocysteine from L-cystathionine: step 1/1. In terms of biological role, catalyzes the cleavage of cystathionine to homocysteine, pyruvate and ammonia during methionine biosynthesis. This chain is Cystathionine beta-lyase (metC), found in Salmonella typhimurium (strain LT2 / SGSC1412 / ATCC 700720).